The following is a 601-amino-acid chain: Elongation factor 4 (601 aa).

One can recognise a tr-type G domain in the interval 7-189; it reads RNIRNFSIIA…AIVHRIPPPA (183 aa). Residues 19–24 and 136–139 each bind GTP; these read DHGKST and NKID.

Belongs to the TRAFAC class translation factor GTPase superfamily. Classic translation factor GTPase family. LepA subfamily.

The protein localises to the cell inner membrane. It catalyses the reaction GTP + H2O = GDP + phosphate + H(+). Required for accurate and efficient protein synthesis under certain stress conditions. May act as a fidelity factor of the translation reaction, by catalyzing a one-codon backward translocation of tRNAs on improperly translocated ribosomes. Back-translocation proceeds from a post-translocation (POST) complex to a pre-translocation (PRE) complex, thus giving elongation factor G a second chance to translocate the tRNAs correctly. Binds to ribosomes in a GTP-dependent manner. The polypeptide is Elongation factor 4 (Xanthomonas oryzae pv. oryzae (strain MAFF 311018)).